The sequence spans 268 residues: Proenkephalin-A (268 aa).

The signal sequence occupies residues 1–24 (MARFLRLCTWLLALGSCLLATVQA). 3 disulfides stabilise this stretch: Cys-26/Cys-48, Cys-30/Cys-52, and Cys-33/Cys-65. The tract at residues 163 to 184 (TGDNRAKDSHQQESTNNDEDMS) is disordered. Propeptides lie at residues 197–208 (SPQLEDEAKELQ) and 218–228 (VGRPEWWMDYQ). Ser-252 carries the post-translational modification Phosphoserine.

It belongs to the opioid neuropeptide precursor family. In terms of processing, proenkephalin-A is cleaved by CTSL to generate Met-enkephalin. Processed and degraded by ACE. Post-translationally, probably cleaved by ACE. In terms of processing, processed by ACE to generate Met-enkephalin in the nucleus accumbens of the brain. The N-terminal domain contains 6 conserved cysteines thought to be involved in disulfide bonding and/or processing. Spermatogenic and somatic cells.

It is found in the cytoplasmic vesicle. The protein localises to the secretory vesicle. Its subcellular location is the chromaffin granule lumen. The protein resides in the secreted. Functionally, neuropeptide that competes with and mimic the effects of opiate drugs. They play a role in a number of physiologic functions, including pain perception and responses to stress. In terms of biological role, met-enkephalin-Arg-Phe neuropeptide acts as a strong ligand of Mu-type opioid receptor OPRM1. Met-enkephalin-Arg-Phe-binding to OPRM1 in the nucleus accumbens of the brain increases activation of OPRM1, leading to long-term synaptic depression of glutamate release. Increases glutamate release in the striatum and decreases GABA concentration in the striatum. Its function is as follows. Increases glutamate release in the striatum. In Mus musculus (Mouse), this protein is Proenkephalin-A (Penk).